Consider the following 341-residue polypeptide: Putative MAGE domain-containing protein MAGEA13P (341 aa).

Disordered stretches follow at residues 1-21 (MPHS…APKE) and 78-101 (KATP…GASQ). Residues 87-97 (ESSRSQEKKDP) are compositionally biased toward basic and acidic residues. An MAGE domain is found at 105 to 304 (LEKKVDELVK…SSFPLLYEEA (200 aa)).

This Homo sapiens (Human) protein is Putative MAGE domain-containing protein MAGEA13P (MAGEA13P).